The primary structure comprises 289 residues: Acetyl-coenzyme A carboxylase carboxyl transferase subunit beta (289 aa).

One can recognise a CoA carboxyltransferase N-terminal domain in the interval 24 to 289; the sequence is LWTNCESCGQ…RQKTVSDAAA (266 aa). The Zn(2+) site is built by Cys-28, Cys-31, Cys-47, and Cys-50. A C4-type zinc finger spans residues 28–50; sequence CESCGQMMLTKELERSEKVCPHC.

It belongs to the AccD/PCCB family. As to quaternary structure, acetyl-CoA carboxylase is a heterohexamer composed of biotin carboxyl carrier protein (AccB), biotin carboxylase (AccC) and two subunits each of ACCase subunit alpha (AccA) and ACCase subunit beta (AccD). Requires Zn(2+) as cofactor.

It is found in the cytoplasm. It carries out the reaction N(6)-carboxybiotinyl-L-lysyl-[protein] + acetyl-CoA = N(6)-biotinyl-L-lysyl-[protein] + malonyl-CoA. It functions in the pathway lipid metabolism; malonyl-CoA biosynthesis; malonyl-CoA from acetyl-CoA: step 1/1. Its function is as follows. Component of the acetyl coenzyme A carboxylase (ACC) complex. Biotin carboxylase (BC) catalyzes the carboxylation of biotin on its carrier protein (BCCP) and then the CO(2) group is transferred by the transcarboxylase to acetyl-CoA to form malonyl-CoA. This is Acetyl-coenzyme A carboxylase carboxyl transferase subunit beta from Gluconobacter oxydans (strain 621H) (Gluconobacter suboxydans).